The chain runs to 320 residues: 1,5-anhydro-D-fructose reductase (320 aa).

Y40 functions as the Proton donor in the catalytic mechanism. H102 is a binding site for substrate. Residues Q194 and I265–N277 contribute to the NADP(+) site.

This sequence belongs to the aldo/keto reductase family. Monomer.

It localises to the cytoplasm. The catalysed reaction is 1,5-anhydro-D-glucitol + NADP(+) = 1,5-anhydro-D-fructose + NADPH + H(+). With respect to regulation, inhibited by p-chloromercuribenzoic acid and alkyliodines. Functionally, catalyzes the NADPH-dependent reduction of 1,5-anhydro-D-fructose (AF) to 1,5-anhydro-D-glucitol. The chain is 1,5-anhydro-D-fructose reductase (AKR1E2) from Macaca fascicularis (Crab-eating macaque).